The sequence spans 1113 residues: Atrial natriuretic peptide-converting enzyme (1113 aa).

The Cytoplasmic segment spans residues 1–112 (MGRVSFSVRV…QKLVTANLLR (112 aa)). A helical; Signal-anchor for type II membrane protein transmembrane segment spans residues 113–133 (FLLLVLIPCICALIVLLAILL). Over 134–1113 (SFVGTLKRVY…QTFLQKKSQG (980 aa)) the chain is Extracellular. 3 N-linked (GlcNAc...) asparagine glycosylation sites follow: Asn-147, Asn-202, and Asn-208. The disordered stretch occupies residues 176 to 202 (APSLPPSQSTPAWTPRAPSPEDQSHRN). Residues 201 to 327 (RNTSTCMNIT…SSVRKSCFSL (127 aa)) enclose the FZ 1 domain. Disulfide bonds link Cys-206–Cys-266, Cys-214–Cys-259, Cys-250–Cys-290, Cys-279–Cys-324, Cys-283–Cys-307, Cys-337–Cys-350, Cys-345–Cys-363, and Cys-357–Cys-372. N-linked (GlcNAc...) asparagine glycans are attached at residues Asn-298 and Asn-317. 4 LDL-receptor class A domains span residues 336–372 (LCGGGESFLCTSGLCVPKKLQCNGYNDCDDWSDEAHC), 373–408 (NCSKDLFHCGTGKCLHYSLLCDGYDDCGDLSDEQNC), 409–445 (DCNLTKEHRCGDGRCIAAEWVCDGDHDCVDKSDEVNC), and 446–483 (SCHSQGLVECRSGQCIPSTFQCDGDEDCKDGSDEENCS). Residue Asn-373 is glycosylated (N-linked (GlcNAc...) asparagine). 9 cysteine pairs are disulfide-bonded: Cys-374/Cys-386, Cys-381/Cys-399, Cys-393/Cys-408, Cys-410/Cys-423, Cys-418/Cys-436, Cys-430/Cys-445, Cys-447/Cys-460, Cys-455/Cys-473, and Cys-467/Cys-482. Asn-411 is a glycosylation site (N-linked (GlcNAc...) asparagine). Asn-444 is a glycosylation site (N-linked (GlcNAc...) asparagine). N-linked (GlcNAc...) asparagine glycans are attached at residues Asn-481, Asn-519, and Asn-537. In terms of domain architecture, FZ 2 spans 518–641 (SNCSQCEPIT…SSDNQTCLLP (124 aa)). Intrachain disulfides connect Cys-523-Cys-586, Cys-531-Cys-579, Cys-570-Cys-608, Cys-597-Cys-638, Cys-601-Cys-625, Cys-648-Cys-660, Cys-655-Cys-673, Cys-667-Cys-682, Cys-684-Cys-698, Cys-692-Cys-711, Cys-705-Cys-720, Cys-723-Cys-735, Cys-730-Cys-748, and Cys-742-Cys-757. N-linked (GlcNAc...) asparagine glycosylation is present at Asn-635. LDL-receptor class A domains are found at residues 647 to 682 (ECSPSHFKCRSGRCVLGSRRCDGQADCDDDSDEENC), 683 to 721 (GCKERALWECPFNKQCLKHTLICDGFPDCPDSMDEKNCS), and 722 to 757 (FCQDNELECANHECVPRDLWCDGWVDCSDSSDEWGC). A glycan (N-linked (GlcNAc...) asparagine) is linked at Asn-719. Residues 758–853 (VTLSKNGNSS…SRSEISLLCS (96 aa)) form the SRCR domain. Asn-765 and Asn-828 each carry an N-linked (GlcNAc...) asparagine glycan. 6 disulfide bridges follow: Cys-782-Cys-884, Cys-857-Cys-979, Cys-895-Cys-911, Cys-993-Cys-1058, Cys-1022-Cys-1037, and Cys-1048-Cys-1077. Residues 869–1102 (ILGGRTSRPG…FVGWIERQIY (234 aa)) enclose the Peptidase S1 domain. Catalysis depends on charge relay system residues His-910 and Asp-959. Residue Asn-970 is glycosylated (N-linked (GlcNAc...) asparagine). Ser-1052 serves as the catalytic Charge relay system. N-linked (GlcNAc...) asparagine glycosylation is present at Asn-1089.

The protein belongs to the peptidase S1 family. In terms of processing, N-glycosylated; required for processing and activation. Activated through proteolytic processing by a trypsin-like protease; cleaved into a N-terminal propeptide and an activated corin protease fragment. Atrial natriuretic peptide-converting enzyme, 180 kDa soluble fragment is produced by cleavage by ADAM10. Cleavage by ADAM10 to produce soluble 180 kDa soluble fragment takes place after the transmembrane region and before FZ 1. Post-translationally, a disulfide bond links the activated corin protease fragment and the N-terminal propeptide. The disulfide bond also links the activated corin protease fragment with Atrial natriuretic peptide-converting enzyme, 180 kDa soluble fragment. Highly expressed in heart. Also expressed in pregnant uterus.

Its subcellular location is the cell membrane. It localises to the secreted. Functionally, serine-type endopeptidase involved in atrial natriuretic peptide (NPPA) processing. Converts through proteolytic cleavage the non-functional propeptide NPPA into the active hormone, thereby regulating blood pressure in heart and promoting natriuresis, diuresis and vasodilation. Proteolytic cleavage of pro-NPPA also plays a role in female pregnancy by promoting trophoblast invasion and spiral artery remodeling in uterus. Also acts as a regulator of sodium reabsorption in kidney. May also process pro-NPPB the B-type natriuretic peptide. This chain is Atrial natriuretic peptide-converting enzyme (Corin), found in Mus musculus (Mouse).